A 629-amino-acid chain; its full sequence is tRNA uridine 5-carboxymethylaminomethyl modification enzyme MnmG (629 aa).

Residues 13–18, Val125, and Ser180 each bind FAD; that span reads GGGHAG. Residue 273 to 287 coordinates NAD(+); sequence GPRYCPSIEDKVMRF. Gln370 is a binding site for FAD.

The protein belongs to the MnmG family. Homodimer. Heterotetramer of two MnmE and two MnmG subunits. FAD serves as cofactor.

The protein localises to the cytoplasm. NAD-binding protein involved in the addition of a carboxymethylaminomethyl (cmnm) group at the wobble position (U34) of certain tRNAs, forming tRNA-cmnm(5)s(2)U34. The polypeptide is tRNA uridine 5-carboxymethylaminomethyl modification enzyme MnmG (Shigella dysenteriae serotype 1 (strain Sd197)).